The sequence spans 355 residues: Tetraacyldisaccharide 4'-kinase (355 aa).

48 to 55 serves as a coordination point for ATP; sequence SVGGTGKT.

The protein belongs to the LpxK family.

It catalyses the reaction a lipid A disaccharide + ATP = a lipid IVA + ADP + H(+). It participates in glycolipid biosynthesis; lipid IV(A) biosynthesis; lipid IV(A) from (3R)-3-hydroxytetradecanoyl-[acyl-carrier-protein] and UDP-N-acetyl-alpha-D-glucosamine: step 6/6. Transfers the gamma-phosphate of ATP to the 4'-position of a tetraacyldisaccharide 1-phosphate intermediate (termed DS-1-P) to form tetraacyldisaccharide 1,4'-bis-phosphate (lipid IVA). The sequence is that of Tetraacyldisaccharide 4'-kinase from Pelodictyon phaeoclathratiforme (strain DSM 5477 / BU-1).